Here is a 450-residue protein sequence, read N- to C-terminus: Glucose-6-phosphate isomerase (450 aa).

Phosphothreonine is present on Thr-39. Glu-291 (proton donor) is an active-site residue. Residues His-312 and Lys-426 contribute to the active site.

This sequence belongs to the GPI family.

It localises to the cytoplasm. It carries out the reaction alpha-D-glucose 6-phosphate = beta-D-fructose 6-phosphate. The protein operates within carbohydrate biosynthesis; gluconeogenesis. Its pathway is carbohydrate degradation; glycolysis; D-glyceraldehyde 3-phosphate and glycerone phosphate from D-glucose: step 2/4. Functionally, catalyzes the reversible isomerization of glucose-6-phosphate to fructose-6-phosphate. This Bacillus cereus (strain ATCC 10987 / NRS 248) protein is Glucose-6-phosphate isomerase.